The sequence spans 166 residues: MEQDNSPRKIQFTVPLLEPHLDPEAAEQIRRRRPTPATLVLTSDQSSPEVDEDRIPNPLLKPSLAMSPRQRKKMTRTTPTMKELQMMVEHHLGQQEQGEEPEGAAEGTGAQESQPPGTPGTGAESRLGPSATAQKPAQPSPRAQERRGEEPSTAKTSQDSQGASAV.

Position 1 is an N-acetylmethionine (Met-1). Residues 1–166 are disordered; sequence MEQDNSPRKI…SQDSQGASAV (166 aa). The tract at residues 9-12 is essential for activity; the sequence is KIQF. Residues 19 to 29 are compositionally biased toward basic and acidic residues; the sequence is PHLDPEAAEQI. Thr-35 carries the phosphothreonine; by PKA modification. An essential for activity region spans residues 42 to 54; sequence TSDQSSPEVDEDR. 4 positions are modified to phosphoserine: Ser-43, Ser-46, Ser-47, and Ser-67. A compositionally biased stretch (low complexity) spans 104 to 114; sequence AAEGTGAQESQ. The segment covering 143–152 has biased composition (basic and acidic residues); the sequence is AQERRGEEPS. The interaction with PPP1R15A stretch occupies residues 143 to 166; the sequence is AQERRGEEPSTAKTSQDSQGASAV. A compositionally biased stretch (polar residues) spans 153 to 166; the sequence is TAKTSQDSQGASAV.

It belongs to the protein phosphatase inhibitor 1 family. As to quaternary structure, interacts with PPP1R15A. Phosphorylation of Thr-35 is required for activity.

Functionally, inhibitor of protein-phosphatase 1. This protein may be important in hormonal control of glycogen metabolism. Hormones that elevate intracellular cAMP increase I-1 activity in many tissues. I-1 activation may impose cAMP control over proteins that are not directly phosphorylated by PKA. Following a rise in intracellular calcium, I-1 is inactivated by calcineurin (or PP2B). Does not inhibit type-2 phosphatases. The protein is Protein phosphatase 1 regulatory subunit 1A (PPP1R1A) of Oryctolagus cuniculus (Rabbit).